A 473-amino-acid polypeptide reads, in one-letter code: Mitochondrial distribution and morphology protein 10 (473 aa).

This sequence belongs to the MDM10 family. Component of the ER-mitochondria encounter structure (ERMES) or MDM complex, composed of MMM1, MDM10, MDM12 and MDM34. Associates with the mitochondrial outer membrane sorting assembly machinery SAM(core) complex.

Its subcellular location is the mitochondrion outer membrane. Its function is as follows. Component of the ERMES/MDM complex, which serves as a molecular tether to connect the endoplasmic reticulum and mitochondria. Components of this complex are involved in the control of mitochondrial shape and protein biogenesis and may function in phospholipid exchange. MDM10 is involved in the late assembly steps of the general translocase of the mitochondrial outer membrane (TOM complex). Functions in the TOM40-specific route of the assembly of outer membrane beta-barrel proteins, including the association of TOM40 with the receptor TOM22 and small TOM proteins. Can associate with the SAM(core) complex as well as the MDM12-MMM1 complex, both involved in late steps of the major beta-barrel assembly pathway, that is responsible for biogenesis of all outer membrane beta-barrel proteins. May act as a switch that shuttles between both complexes and channels precursor proteins into the TOM40-specific pathway. Plays a role in mitochondrial morphology and in the inheritance of mitochondria. This chain is Mitochondrial distribution and morphology protein 10, found in Candida albicans (strain WO-1) (Yeast).